Here is a 367-residue protein sequence, read N- to C-terminus: NADH-quinone oxidoreductase subunit D (367 aa).

The protein belongs to the complex I 49 kDa subunit family. NDH-1 is composed of 14 different subunits. Subunits NuoB, C, D, E, F, and G constitute the peripheral sector of the complex.

It localises to the cell membrane. It catalyses the reaction a quinone + NADH + 5 H(+)(in) = a quinol + NAD(+) + 4 H(+)(out). In terms of biological role, NDH-1 shuttles electrons from NADH, via FMN and iron-sulfur (Fe-S) centers, to quinones in the respiratory chain. The immediate electron acceptor for the enzyme in this species is believed to be a menaquinone. Couples the redox reaction to proton translocation (for every two electrons transferred, four hydrogen ions are translocated across the cytoplasmic membrane), and thus conserves the redox energy in a proton gradient. The protein is NADH-quinone oxidoreductase subunit D of Geobacillus kaustophilus (strain HTA426).